Here is a 706-residue protein sequence, read N- to C-terminus: DNA ligase (706 aa).

NAD(+)-binding positions include 47–51 (DSEYD), 96–97 (SI), and E133. K135 functions as the N6-AMP-lysine intermediate in the catalytic mechanism. NAD(+) is bound by residues R156, E192, K323, and K347. Zn(2+) is bound by residues C441, C444, C459, and C465. In terms of domain architecture, BRCT spans 624–706 (VAPKPLSGKT…MRLLASAEAE (83 aa)).

It belongs to the NAD-dependent DNA ligase family. LigA subfamily. Mg(2+) serves as cofactor. Mn(2+) is required as a cofactor.

It carries out the reaction NAD(+) + (deoxyribonucleotide)n-3'-hydroxyl + 5'-phospho-(deoxyribonucleotide)m = (deoxyribonucleotide)n+m + AMP + beta-nicotinamide D-nucleotide.. Functionally, DNA ligase that catalyzes the formation of phosphodiester linkages between 5'-phosphoryl and 3'-hydroxyl groups in double-stranded DNA using NAD as a coenzyme and as the energy source for the reaction. It is essential for DNA replication and repair of damaged DNA. The polypeptide is DNA ligase (Polaromonas sp. (strain JS666 / ATCC BAA-500)).